Here is a 214-residue protein sequence, read N- to C-terminus: Single-pass membrane and coiled-coil domain-containing protein 1 (214 aa).

A coiled-coil region spans residues 6–42 (TTLISLKEAMKRVDHKLQALETQFKELDFTKDNLMQK). A helical transmembrane segment spans residues 65–81 (ALQLTSMELNILYSYVI).

The protein resides in the membrane. The polypeptide is Single-pass membrane and coiled-coil domain-containing protein 1 (SMCO1) (Homo sapiens (Human)).